The sequence spans 160 residues: Small ribosomal subunit protein uS7 (160 aa).

This sequence belongs to the universal ribosomal protein uS7 family. In terms of assembly, part of the 30S ribosomal subunit. Contacts proteins S9 and S11.

Its function is as follows. One of the primary rRNA binding proteins, it binds directly to 16S rRNA where it nucleates assembly of the head domain of the 30S subunit. Is located at the subunit interface close to the decoding center, probably blocks exit of the E-site tRNA. This chain is Small ribosomal subunit protein uS7, found in Rickettsia prowazekii (strain Madrid E).